We begin with the raw amino-acid sequence, 158 residues long: C-type lectin mannose-binding isoform (158 aa).

The first 23 residues, Met-1 to Ser-23, serve as a signal peptide directing secretion. Cystine bridges form between Cys-26–Cys-37, Cys-54–Cys-154, Cys-61–Cys-156, and Cys-129–Cys-146. The 123-residue stretch at Lys-33–Gln-155 folds into the C-type lectin domain. Residues Glu-119–Asn-121 carry the Mannose-binding motif. Asn-121 is a glycosylation site (N-linked (GlcNAc...) asparagine). Glu-127, Asn-142, and Asp-143 together coordinate Ca(2+).

It belongs to the true venom lectin family. Dimer. Probably disulfide-linked homodimer. Expressed by the venom gland.

The protein localises to the secreted. Functionally, mannose-binding lectin that binds to and agglutinates rabbit (but not human) erythrocytes in a calcium-dependent manner. This is C-type lectin mannose-binding isoform from Oxyuranus scutellatus (Coastal taipan).